The chain runs to 246 residues: Acetoacetyl-CoA reductase (246 aa).

NADP(+) is bound by residues 13-15 (GGI), Gly-35, Arg-40, 60-62 (GNV), and 88-92 (NAGIT). Substrate is bound by residues Asp-94 and 147–150 (QFGQ). Tyr-153 acts as the Proton acceptor in catalysis. Position 183-186 (183-186 (PGYI)) interacts with NADP(+). Substrate is bound by residues 184–185 (GY) and Arg-195.

It belongs to the short-chain dehydrogenases/reductases (SDR) family. Homotetramer.

The protein localises to the cytoplasm. It carries out the reaction a (3R)-3-hydroxyacyl-CoA + NADP(+) = a 3-oxoacyl-CoA + NADPH + H(+). The enzyme catalyses (3R)-3-hydroxybutanoyl-CoA + NADP(+) = acetoacetyl-CoA + NADPH + H(+). The protein operates within biopolymer metabolism; poly-(R)-3-hydroxybutanoate biosynthesis. In terms of biological role, catalyzes the chiral reduction of acetoacetyl-CoA to (R)-3-hydroxybutyryl-CoA. Is involved in the biosynthesis of polyhydroxybutyrate (PHB), which is accumulated as an intracellular energy reserve material when cells grow under conditions of nutrient limitation. This Cupriavidus necator (strain ATCC 17699 / DSM 428 / KCTC 22496 / NCIMB 10442 / H16 / Stanier 337) (Ralstonia eutropha) protein is Acetoacetyl-CoA reductase.